The following is a 578-amino-acid chain: Dapdiamide synthesis protein DdaD (578 aa).

The 76-residue stretch at 498 to 573 folds into the Carrier domain; that stretch reads ESISATEHQI…KMAAWLDASS (76 aa). Ser-533 is modified (O-(pantetheine 4'-phosphoryl)serine).

The protein belongs to the ATP-dependent AMP-binding enzyme family. It depends on pantetheine 4'-phosphate as a cofactor.

It functions in the pathway antibiotic biosynthesis. Its function is as follows. Involved in dapdiamide antibiotics biosynthesis. Activates and sequesters N-beta-fumaramoyl-DAP as a covalently tethered thioester for subsequent oxidative modification of the fumaramoyl group. The protein is Dapdiamide synthesis protein DdaD of Enterobacter agglomerans (Erwinia herbicola).